A 134-amino-acid chain; its full sequence is ATP synthase epsilon chain (134 aa).

Belongs to the ATPase epsilon chain family. F-type ATPases have 2 components, CF(1) - the catalytic core - and CF(0) - the membrane proton channel. CF(1) has five subunits: alpha(3), beta(3), gamma(1), delta(1), epsilon(1). CF(0) has three main subunits: a, b and c.

The protein localises to the cell membrane. In terms of biological role, produces ATP from ADP in the presence of a proton gradient across the membrane. In Listeria welshimeri serovar 6b (strain ATCC 35897 / DSM 20650 / CCUG 15529 / CIP 8149 / NCTC 11857 / SLCC 5334 / V8), this protein is ATP synthase epsilon chain.